The following is a 467-amino-acid chain: Methionine aminopeptidase 2-1 (467 aa).

A compositionally biased stretch (basic and acidic residues) spans 1–10 (MGSKSPDGHR). The interval 1–105 (MGSKSPDGHR…TPPRVSLPSI (105 aa)) is disordered. Residues 43–55 (DGDDEDEDGDDDG) show a composition bias toward acidic residues. Residues 75 to 90 (KKRKRKSNKKKKKKTS) show a composition bias toward basic residues. Residue His-219 participates in substrate binding. The a divalent metal cation site is built by Asp-240, Asp-251, and His-320. His-328 lines the substrate pocket. A divalent metal cation contacts are provided by Glu-353 and Glu-448.

It belongs to the peptidase M24A family. Methionine aminopeptidase eukaryotic type 2 subfamily. Requires Co(2+) as cofactor. Zn(2+) is required as a cofactor. It depends on Mn(2+) as a cofactor. The cofactor is Fe(2+).

It localises to the cytoplasm. The enzyme catalyses Release of N-terminal amino acids, preferentially methionine, from peptides and arylamides.. In terms of biological role, cotranslationally removes the N-terminal methionine from nascent proteins. The N-terminal methionine is often cleaved when the second residue in the primary sequence is small and uncharged (Met-Ala-, Cys, Gly, Pro, Ser, Thr, or Val). The protein is Methionine aminopeptidase 2-1 of Arthroderma gypseum (strain ATCC MYA-4604 / CBS 118893) (Microsporum gypseum).